Reading from the N-terminus, the 702-residue chain is MADS-box MEF2 type transcription factor MIG1 (702 aa).

In terms of domain architecture, MADS-box spans 1 to 61; the sequence is MGRRKIEIKA…KKLYEYSSGD (61 aa). Disordered stretches follow at residues 73-608 and 658-702; these read GGAT…NIDT and PSFL…KVDS. A compositionally biased stretch (acidic residues) spans 86–96; the sequence is GGDDDDEEEGD. The segment covering 132 to 144 has biased composition (pro residues); it reads ASPPIPNGVPFPP. Residues 145–155 show a composition bias toward low complexity; sequence HGHGVPRGHTP. The span at 180–195 shows a compositional bias: polar residues; the sequence is GSPQVNGFGFGQQQSM. Positions 201–241 are enriched in pro residues; the sequence is TTMPPHMPPQMAPGPPFPYPQHPQHPPHPPHPPHPPHPQQP. 3 stretches are compositionally biased toward low complexity: residues 273-284, 326-343, and 350-371; these read PMGMQRHSVSPP, ESPQ…QQPE, and EQQQ…QSEP. Positions 456-465 are enriched in polar residues; it reads VDESTSNASE. Low complexity-rich tracts occupy residues 487–512 and 530–553; these read RASI…SLRA and DGSG…DATS. A compositionally biased stretch (polar residues) spans 554–567; the sequence is QSTRQNDSHSSTNM. Residues 587-600 are compositionally biased toward pro residues; the sequence is PPNPFAPKRPPQHP. Basic and acidic residues predominate over residues 693-702; it reads NEPKRVKVDS.

This sequence belongs to the MEF2 family. Interacts with MAPK MPS1.

Its subcellular location is the nucleus. Its function is as follows. Transcription factor acting downstream of the MPS1 MAP kinase (MAPK) cascade during conidiation and plant infection. Required for overcoming plant defense responses and the differentiation of secondary infectious hyphae in live plant cells. This chain is MADS-box MEF2 type transcription factor MIG1, found in Pyricularia oryzae (Rice blast fungus).